The primary structure comprises 422 residues: MNNLEIFKESEKYMPGGVNSPVRAFSNASINPPIIKKGLGSRIVDEEGKEYIDFVASWGPMILGHNDPEVVEAIQNTVEDAISFGAPTELELKLAKHMVETLDNIDMVRMVNSGTEATMSAIKLARGYTRRDRIIKFAGCYHGHFDGFLVEAGSGVLTERIPGSPGVPKGSIENTLIAEYNHIDTVEALFEKYPEEIAAIIIEPIAGNMGTIPAKTEFLQRLREICTKYGALLIFDEVMTGFRVAYKGAQSRYGVKPDLTTYAKIMGGGLPSGAYGGRRDIMEKLSPIGPVYQAGTMSGNPVVMAAGYTTLRKLYNNPSYYEHMEKIGAELQKGIEIVAKEKGLPVVVNRCGAMLTPFFSKRDKVADYEDAKSSDTELYGRFFEHMIKSGIYIAPSQFEAMFIGVKHDIYEVERFLEAMRKF.

Lysine 264 is subject to N6-(pyridoxal phosphate)lysine.

This sequence belongs to the class-III pyridoxal-phosphate-dependent aminotransferase family. HemL subfamily. Homodimer. It depends on pyridoxal 5'-phosphate as a cofactor.

The protein resides in the cytoplasm. It catalyses the reaction (S)-4-amino-5-oxopentanoate = 5-aminolevulinate. It functions in the pathway porphyrin-containing compound metabolism; protoporphyrin-IX biosynthesis; 5-aminolevulinate from L-glutamyl-tRNA(Glu): step 2/2. The chain is Glutamate-1-semialdehyde 2,1-aminomutase from Clostridium tetani (strain Massachusetts / E88).